Consider the following 294-residue polypeptide: Tyrosine recombinase XerC (294 aa).

The region spanning 1 to 85 (MSRLVEDFFA…ACRGFYTWLV (85 aa)) is the Core-binding (CB) domain. The Tyr recombinase domain maps to 106 to 283 (KLPRILDADE…DFQYLSKVYD (178 aa)). Active-site residues include Arg145, Lys169, His235, Arg238, and His261. The O-(3'-phospho-DNA)-tyrosine intermediate role is filled by Tyr270.

The protein belongs to the 'phage' integrase family. XerC subfamily. As to quaternary structure, forms a cyclic heterotetrameric complex composed of two molecules of XerC and two molecules of XerD.

Its subcellular location is the cytoplasm. Functionally, site-specific tyrosine recombinase, which acts by catalyzing the cutting and rejoining of the recombining DNA molecules. The XerC-XerD complex is essential to convert dimers of the bacterial chromosome into monomers to permit their segregation at cell division. It also contributes to the segregational stability of plasmids. The protein is Tyrosine recombinase XerC of Xylella fastidiosa (strain M23).